Here is a 295-residue protein sequence, read N- to C-terminus: Enolase-phosphatase E1 (295 aa).

Mg(2+) contacts are provided by Asp-20 and Glu-22. Residues 153–154 (SS) and Lys-187 each bind substrate. Asp-212 serves as a coordination point for Mg(2+). Residues 260 to 295 (ETKEENGGATNGKRKIEETNDDVAEEDKAQVYPNKK) are disordered.

This sequence belongs to the HAD-like hydrolase superfamily. MasA/MtnC family. As to quaternary structure, monomer. It depends on Mg(2+) as a cofactor.

It is found in the cytoplasm. It localises to the nucleus. It catalyses the reaction 5-methylsulfanyl-2,3-dioxopentyl phosphate + H2O = 1,2-dihydroxy-5-(methylsulfanyl)pent-1-en-3-one + phosphate. It participates in amino-acid biosynthesis; L-methionine biosynthesis via salvage pathway; L-methionine from S-methyl-5-thio-alpha-D-ribose 1-phosphate: step 3/6. Its pathway is amino-acid biosynthesis; L-methionine biosynthesis via salvage pathway; L-methionine from S-methyl-5-thio-alpha-D-ribose 1-phosphate: step 4/6. In terms of biological role, bifunctional enzyme that catalyzes the enolization of 2,3-diketo-5-methylthiopentyl-1-phosphate (DK-MTP-1-P) into the intermediate 2-hydroxy-3-keto-5-methylthiopentenyl-1-phosphate (HK-MTPenyl-1-P), which is then dephosphorylated to form the acireductone 1,2-dihydroxy-3-keto-5-methylthiopentene (DHK-MTPene). This is Enolase-phosphatase E1 from Anopheles gambiae (African malaria mosquito).